The sequence spans 595 residues: APOBEC1 complementation factor (595 aa).

RRM domains lie at 56-134 (CEIF…ASVD), 136-218 (CRLF…WAEP), and 231-303 (KILY…LAKP). The tract at residues 360-409 (HFPATKGHLSNRALIRTPSVREIYMNVPVGAAGVRGLGGRGYLAYTGLGR) is required for nuclear localization.

Part of the apolipoprotein B mRNA editing complex with APOBEC1. Interacts with TNPO2; TNPO2 may be responsible for transport of A1CF into the nucleus. Interacts with SYNCRIP. Interacts with CELF2/CUGBP2. Interacts with RBM47. As to expression, expressed primarily in liver, small intestine and kidney.

It is found in the nucleus. The protein resides in the endoplasmic reticulum. It localises to the cytoplasm. Its function is as follows. Essential component of the apolipoprotein B mRNA editing enzyme complex which is responsible for the postranscriptional editing of a CAA codon for Gln to a UAA codon for stop in APOB mRNA. Binds to APOB mRNA and is probably responsible for docking the catalytic subunit, APOBEC1, to the mRNA to allow it to deaminate its target cytosine. The complex also seems to protect the edited APOB mRNA from nonsense-mediated decay. This Mus musculus (Mouse) protein is APOBEC1 complementation factor (A1cf).